Here is a 935-residue protein sequence, read N- to C-terminus: Phosphoenolpyruvate carboxylase (935 aa).

Catalysis depends on residues His-161 and Lys-593.

The protein belongs to the PEPCase type 1 family. Requires Mg(2+) as cofactor.

The enzyme catalyses oxaloacetate + phosphate = phosphoenolpyruvate + hydrogencarbonate. Forms oxaloacetate, a four-carbon dicarboxylic acid source for the tricarboxylic acid cycle. The protein is Phosphoenolpyruvate carboxylase of Mycobacterium avium (strain 104).